We begin with the raw amino-acid sequence, 98 residues long: NADH-ubiquinone oxidoreductase chain 4L (98 aa).

3 consecutive transmembrane segments (helical) span residues 1 to 21 (MALIYTNTLLAFTISLLGLLL), 29 to 49 (SLLCLEGMMLSMFVMVAVMIL), and 61 to 81 (IVLLVFAACEAALGLSLLVMV).

This sequence belongs to the complex I subunit 4L family. In terms of assembly, core subunit of respiratory chain NADH dehydrogenase (Complex I) which is composed of 45 different subunits.

The protein resides in the mitochondrion inner membrane. It catalyses the reaction a ubiquinone + NADH + 5 H(+)(in) = a ubiquinol + NAD(+) + 4 H(+)(out). Core subunit of the mitochondrial membrane respiratory chain NADH dehydrogenase (Complex I) which catalyzes electron transfer from NADH through the respiratory chain, using ubiquinone as an electron acceptor. Part of the enzyme membrane arm which is embedded in the lipid bilayer and involved in proton translocation. This Rhinolophus monoceros (Formosan lesser horseshoe bat) protein is NADH-ubiquinone oxidoreductase chain 4L (MT-ND4L).